Consider the following 115-residue polypeptide: Con-Ins T2 (115 aa).

Residues 1–21 (MTTSFYFLLVALGLLLYVCQS) form the signal peptide. Positions 22–29 (SFGNQHTR) are excised as a propeptide. 3 cysteine pairs are disulfide-bonded: cysteine 38-cysteine 101, cysteine 50-cysteine 114, and cysteine 100-cysteine 105. At glutamate 48 the chain carries 4-carboxyglutamate. The propeptide at 53 to 94 (KRNDAGKKRGQASPLWQRGGSLSMLKARAKRNEAFHLQRAHR) is c peptide. Position 98 is a 4-carboxyglutamate (glutamate 98). Glutamate 109 bears the 4-carboxyglutamate mark. Cysteine 114 carries the post-translational modification Cysteine amide.

The protein belongs to the insulin family. As to quaternary structure, heterodimer of A and B chains; disulfide-linked. Expressed by the venom gland.

It is found in the secreted. Its function is as follows. This venom insulin facilitates prey capture by rapidly inducing hypoglycemic shock. It is one of the smallest known insulin found in nature and lacks the C-terminal segment of the B chain that, in human insulin, mediates engagement of the insulin receptor (INSR) and assembly of the hormone's hexameric storage form. Despite lacking this segment, it both binds and activates human insulin receptor (long isoform (HIR-B)) with a high potency (EC(50)=15.5 nM). In vivo, intraperitoneal injection of this peptide into zebrafish lowers blood glucose with a lower potency than human insulin. In addition, when applied to water, this peptide reduces overall locomotor activity of zebrafish larvae, observed as a significant decrease in the percentage of time spent swimming and movement frequency. When tested on a mouse model of diabetes, this insulin also lowers blood glucose with a 10-fold lower potency than human insulin. In Conus tulipa (Fish-hunting cone snail), this protein is Con-Ins T2.